The primary structure comprises 179 residues: Large ribosomal subunit protein uL6 (179 aa).

The protein belongs to the universal ribosomal protein uL6 family. As to quaternary structure, part of the 50S ribosomal subunit.

Functionally, this protein binds to the 23S rRNA, and is important in its secondary structure. It is located near the subunit interface in the base of the L7/L12 stalk, and near the tRNA binding site of the peptidyltransferase center. The sequence is that of Large ribosomal subunit protein uL6 from Chlorobium luteolum (strain DSM 273 / BCRC 81028 / 2530) (Pelodictyon luteolum).